Consider the following 272-residue polypeptide: GTP cyclohydrolase FolE2 (272 aa).

This sequence belongs to the GTP cyclohydrolase IV family.

The catalysed reaction is GTP + H2O = 7,8-dihydroneopterin 3'-triphosphate + formate + H(+). The protein operates within cofactor biosynthesis; 7,8-dihydroneopterin triphosphate biosynthesis; 7,8-dihydroneopterin triphosphate from GTP: step 1/1. Converts GTP to 7,8-dihydroneopterin triphosphate. The polypeptide is GTP cyclohydrolase FolE2 (Polynucleobacter asymbioticus (strain DSM 18221 / CIP 109841 / QLW-P1DMWA-1) (Polynucleobacter necessarius subsp. asymbioticus)).